Consider the following 180-residue polypeptide: SAGA-associated factor 11 homolog (180 aa).

Residues 98 to 119 form an SGF11-type zinc finger; it reads CSCPNCNRIVAASRFAPHLEKC. Positions 138–180 are disordered; it reads RDGGNYFGADEDDEDDADWSGEKRKKKIAPVRTNGSKKNGKTS. The span at 146–156 shows a compositional bias: acidic residues; it reads ADEDDEDDADW.

It belongs to the SGF11 family. As to quaternary structure, component of some SAGA transcription coactivator-HAT complexes. Within the SAGA complex, participates in a subcomplex of SAGA called the DUB module (deubiquitination module).

It is found in the nucleus. In terms of biological role, component of the transcription regulatory histone acetylation (HAT) complex SAGA, a multiprotein complex that activates transcription by remodeling chromatin and mediating histone acetylation and deubiquitination. Within the SAGA complex, participates in a subcomplex that specifically deubiquitinates histone H2B. The SAGA complex is recruited to specific gene promoters by activators, where it is required for transcription. This Aedes aegypti (Yellowfever mosquito) protein is SAGA-associated factor 11 homolog.